Here is a 479-residue protein sequence, read N- to C-terminus: F-box/LRR-repeat protein 16 (479 aa).

Positions 1–92 (MSSPGIDGDP…GPVSGPPVER (92 aa)) are disordered. Pro residues predominate over residues 47–60 (CQPPPPPTLPPPSL). Arg-92 is modified (omega-N-methylarginine). The 46-residue stretch at 94–139 (PLATDEKILNGLFWYFSACEKCILAQVCKAWRRVLYQPKFWAGLTP) folds into the F-box domain. LRR repeat units lie at residues 321–342 (NLTSLSLSGCSKVTDDGVELVA), 347–369 (KLRSLDLSWCPRITDMALEYVAC), 373–394 (RLEELVLDRCVRITDTGLSYLS), 398–419 (SLRSLYLRWCCQVQDFGLKHLL), 423–444 (NLRLLSLAGCPLLTTTGLSGLV), and 446–470 (LQELEELELTNCPGATPELFKYFSQ).

Interacts with SKP1 and CUL1.

Substrate-recognition component of the SCF (SKP1-CUL1-F-box protein)-type E3 ubiquitin ligase complex. The sequence is that of F-box/LRR-repeat protein 16 (Fbxl16) from Mus musculus (Mouse).